Reading from the N-terminus, the 57-residue chain is Potassium channel toxin alpha-KTx 1.5 (57 aa).

Positions 1–20 (MKISFLLLALVICSIGWSEA) are cleaved as a signal peptide. Q21 carries the pyrrolidone carboxylic acid modification. 3 disulfide bridges follow: C27/C48, C33/C53, and C37/C55.

This sequence belongs to the short scorpion toxin superfamily. Potassium channel inhibitor family. Alpha-KTx 01 subfamily. Expressed by the venom gland.

Its subcellular location is the secreted. Its function is as follows. Potent blocker of both large-conductance calcium-activated potassium channels (KCa1.1/KCNMA1) and voltage-gated potassium channels (Kv1.3/KCNA3). Has also been shown to moderately inhibit Kv1.2/KCNA2 and weakly inhibit Kv1.1/KCNA1 channels, as well as 5-hydroxytryptamine 3 receptors (HTR3A). In Olivierus martensii (Manchurian scorpion), this protein is Potassium channel toxin alpha-KTx 1.5.